The primary structure comprises 271 residues: Large ribosomal subunit protein uL18 (271 aa).

A compositionally biased stretch (basic and acidic residues) spans 245-264; the sequence is IRENPCPPKKERTKPADAKR. A disordered region spans residues 245–271; that stretch reads IRENPCPPKKERTKPADAKRWSPQAHL.

Belongs to the universal ribosomal protein uL18 family. Component of the large ribosomal subunit (LSU).

The protein localises to the cytoplasm. The protein resides in the nucleus. In terms of biological role, component of the ribosome, a large ribonucleoprotein complex responsible for the synthesis of proteins in the cell. The small ribosomal subunit (SSU) binds messenger RNAs (mRNAs) and translates the encoded message by selecting cognate aminoacyl-transfer RNA (tRNA) molecules. The large subunit (LSU) contains the ribosomal catalytic site termed the peptidyl transferase center (PTC), which catalyzes the formation of peptide bonds, thereby polymerizing the amino acids delivered by tRNAs into a polypeptide chain. The nascent polypeptides leave the ribosome through a tunnel in the LSU and interact with protein factors that function in enzymatic processing, targeting, and the membrane insertion of nascent chains at the exit of the ribosomal tunnel. This chain is Large ribosomal subunit protein uL18 (RPL5), found in Dunaliella salina (Green alga).